A 397-amino-acid polypeptide reads, in one-letter code: NADH-quinone oxidoreductase subunit D (397 aa).

It belongs to the complex I 49 kDa subunit family. In terms of assembly, NDH-1 is composed of 14 different subunits. Subunits NuoB, C, D, E, F, and G constitute the peripheral sector of the complex.

Its subcellular location is the cell inner membrane. The catalysed reaction is a quinone + NADH + 5 H(+)(in) = a quinol + NAD(+) + 4 H(+)(out). In terms of biological role, NDH-1 shuttles electrons from NADH, via FMN and iron-sulfur (Fe-S) centers, to quinones in the respiratory chain. The immediate electron acceptor for the enzyme in this species is believed to be ubiquinone. Couples the redox reaction to proton translocation (for every two electrons transferred, four hydrogen ions are translocated across the cytoplasmic membrane), and thus conserves the redox energy in a proton gradient. The sequence is that of NADH-quinone oxidoreductase subunit D from Magnetococcus marinus (strain ATCC BAA-1437 / JCM 17883 / MC-1).